The chain runs to 270 residues: uncharacterized protein (270 aa).

Residues 1–10 (MFGLKVKDAT) are compositionally biased toward basic and acidic residues. Disordered regions lie at residues 1–115 (MFGL…PTPW) and 215–236 (QTGF…QGEQ). 2 stretches are compositionally biased toward low complexity: residues 26–41 (SSSS…TQRG) and 98–113 (GTSP…GTPT).

Belongs to the adhesin P1 family.

This is an uncharacterized protein from Mycoplasma pneumoniae (strain ATCC 29342 / M129 / Subtype 1) (Mycoplasmoides pneumoniae).